We begin with the raw amino-acid sequence, 21 residues long: Granulitoxin (21 aa).

The interval 1-21 is disordered; sequence AKTGILDSDGPTVAGNSLSGT.

The protein resides in the secreted. It is found in the nematocyst. Injection into mice produces severe neurotoxic effects such as circular movements, aggressive behavior, dyspnea, tonic-clonic convulsion and death. This Bunodosoma cangicum (Sea anemone) protein is Granulitoxin.